The chain runs to 457 residues: tRNA-2-methylthio-N(6)-dimethylallyladenosine synthase (457 aa).

One can recognise an MTTase N-terminal domain in the interval 3-120 (KKVYVKTFGC…LPQMIDARRE (118 aa)). 6 residues coordinate [4Fe-4S] cluster: cysteine 12, cysteine 49, cysteine 83, cysteine 157, cysteine 161, and cysteine 164. The Radical SAM core domain maps to 143 to 377 (RVEGPSAFVS…QATIEENVAR (235 aa)). The TRAM domain occupies 380-447 (QSMVGKVERI…PHSLRGELVL (68 aa)).

This sequence belongs to the methylthiotransferase family. MiaB subfamily. As to quaternary structure, monomer. Requires [4Fe-4S] cluster as cofactor.

It localises to the cytoplasm. It carries out the reaction N(6)-dimethylallyladenosine(37) in tRNA + (sulfur carrier)-SH + AH2 + 2 S-adenosyl-L-methionine = 2-methylsulfanyl-N(6)-dimethylallyladenosine(37) in tRNA + (sulfur carrier)-H + 5'-deoxyadenosine + L-methionine + A + S-adenosyl-L-homocysteine + 2 H(+). Its function is as follows. Catalyzes the methylthiolation of N6-(dimethylallyl)adenosine (i(6)A), leading to the formation of 2-methylthio-N6-(dimethylallyl)adenosine (ms(2)i(6)A) at position 37 in tRNAs that read codons beginning with uridine. This Burkholderia lata (strain ATCC 17760 / DSM 23089 / LMG 22485 / NCIMB 9086 / R18194 / 383) protein is tRNA-2-methylthio-N(6)-dimethylallyladenosine synthase.